We begin with the raw amino-acid sequence, 134 residues long: (R)-specific enoyl-CoA hydratase (134 aa).

One can recognise a MaoC-like domain in the interval 5 to 119 (SLEVGQKARL…ATLTTRIFTQ (115 aa)). A (3R)-3-hydroxyacyl-CoA contacts are provided by residues 32 to 37 (DFNPLH), G55, and F84.

In terms of assembly, homodimer.

It carries out the reaction a (3R)-3-hydroxyacyl-CoA = a (2E)-enoyl-CoA + H2O. In terms of biological role, catalyzes the hydration of trans-2-enoyl-CoA with a chain-length of 4-6 carbon atoms, forming the corresponding (3R)-3-hydroxyacyl-CoA. The protein is (R)-specific enoyl-CoA hydratase (phaJ) of Aeromonas caviae (Aeromonas punctata).